A 524-amino-acid chain; its full sequence is Glutamyl-tRNA(Gln) amidotransferase subunit A, mitochondrial (524 aa).

The Charge relay system role is filled by Lys-76. A disordered region spans residues 146 to 168; sequence KQYRGKGSPDSSQEDQEPQWLVA. Ser-171 functions as the Charge relay system in the catalytic mechanism. Ser-195 acts as the Acyl-ester intermediate in catalysis.

The protein belongs to the amidase family. GatA subfamily. As to quaternary structure, subunit of the heterotrimeric GatCAB amidotransferase (AdT) complex, composed of A (QRSL1), B (GATB) and C (GATC) subunits.

The protein resides in the mitochondrion. The enzyme catalyses L-glutamyl-tRNA(Gln) + L-glutamine + ATP + H2O = L-glutaminyl-tRNA(Gln) + L-glutamate + ADP + phosphate + H(+). Allows the formation of correctly charged Gln-tRNA(Gln) through the transamidation of misacylated Glu-tRNA(Gln) in the mitochondria. The reaction takes place in the presence of glutamine and ATP through an activated gamma-phospho-Glu-tRNA(Gln). This Ornithorhynchus anatinus (Duckbill platypus) protein is Glutamyl-tRNA(Gln) amidotransferase subunit A, mitochondrial.